Consider the following 353-residue polypeptide: Spermidine/putrescine import ATP-binding protein PotA (353 aa).

The 231-residue stretch at isoleucine 7 to isoleucine 237 folds into the ABC transporter domain. Glycine 39–threonine 46 contacts ATP.

This sequence belongs to the ABC transporter superfamily. Spermidine/putrescine importer (TC 3.A.1.11.1) family. In terms of assembly, the complex is composed of two ATP-binding proteins (PotA), two transmembrane proteins (PotB and PotC) and a solute-binding protein (PotD).

Its subcellular location is the cell membrane. The enzyme catalyses ATP + H2O + polyamine-[polyamine-binding protein]Side 1 = ADP + phosphate + polyamineSide 2 + [polyamine-binding protein]Side 1.. Its function is as follows. Part of the ABC transporter complex PotABCD involved in spermidine/putrescine import. Responsible for energy coupling to the transport system. This chain is Spermidine/putrescine import ATP-binding protein PotA, found in Geobacillus kaustophilus (strain HTA426).